Reading from the N-terminus, the 346-residue chain is Selenocysteine Se-methyltransferase (346 aa).

A Hcy-binding domain is found at 13–330; sequence SMKELLKETG…TTIRAIHKRL (318 aa). Cys248, Cys315, and Cys316 together coordinate Zn(2+).

Zn(2+) is required as a cofactor. In terms of tissue distribution, expressed in roots, young leaves and florets, but not detected in plants not exposed to selenium.

The catalysed reaction is S-methyl-L-methionine + L-selenocysteine = Se-methyl-L-selenocysteine + L-methionine + H(+). Inhibited by L-methionine. Catalyzes the methylation of DL- and L-selenocysteine with S-methylmethionine as donor. Also methylates DL-homocysteine, DL- and L-cysteine in vitro. May be involved in selenium detoxification. The protein is Selenocysteine Se-methyltransferase (SMT) of Brassica oleracea var. italica (Broccoli).